Consider the following 364-residue polypeptide: Thymidine kinase (364 aa).

An ATP-binding site is contributed by 36-43 (GPFGVGKT). The Proton acceptor role is filled by E64. Q108 is a substrate binding site. Residue R201 coordinates ATP. A substrate-binding site is contributed by R207.

This sequence belongs to the herpesviridae thymidine kinase family. In terms of assembly, homodimer.

It catalyses the reaction thymidine + ATP = dTMP + ADP + H(+). Its function is as follows. Catalyzes the transfer of the gamma-phospho group of ATP to thymidine to generate dTMP in the salvage pathway of pyrimidine synthesis. The dTMP serves as a substrate for DNA polymerase during viral DNA replication. Allows the virus to be reactivated and to grow in non-proliferative cells lacking a high concentration of phosphorylated nucleic acid precursors. The sequence is that of Thymidine kinase from Infectious laryngotracheitis virus (strain Thorne V882) (ILTV).